The chain runs to 421 residues: Glutamate-1-semialdehyde 2,1-aminomutase (421 aa).

Position 261 is an N6-(pyridoxal phosphate)lysine (lysine 261).

It belongs to the class-III pyridoxal-phosphate-dependent aminotransferase family. HemL subfamily. Pyridoxal 5'-phosphate is required as a cofactor.

The protein localises to the cytoplasm. It carries out the reaction (S)-4-amino-5-oxopentanoate = 5-aminolevulinate. Its pathway is porphyrin-containing compound metabolism; protoporphyrin-IX biosynthesis; 5-aminolevulinate from L-glutamyl-tRNA(Glu): step 2/2. This chain is Glutamate-1-semialdehyde 2,1-aminomutase (hemL), found in Thermoplasma acidophilum (strain ATCC 25905 / DSM 1728 / JCM 9062 / NBRC 15155 / AMRC-C165).